Here is a 281-residue protein sequence, read N- to C-terminus: Homoserine kinase (281 aa).

83 to 93 (PVSSGLGSSAA) serves as a coordination point for ATP.

It belongs to the GHMP kinase family. Homoserine kinase subfamily.

Its subcellular location is the cytoplasm. The catalysed reaction is L-homoserine + ATP = O-phospho-L-homoserine + ADP + H(+). It functions in the pathway amino-acid biosynthesis; L-threonine biosynthesis; L-threonine from L-aspartate: step 4/5. Its function is as follows. Catalyzes the ATP-dependent phosphorylation of L-homoserine to L-homoserine phosphate. The protein is Homoserine kinase of Thermotoga petrophila (strain ATCC BAA-488 / DSM 13995 / JCM 10881 / RKU-1).